A 335-amino-acid chain; its full sequence is Tryptophan--tRNA ligase (335 aa).

ATP contacts are provided by residues 19–21 (QPS) and 28–29 (GN). The 'HIGH' region motif lies at 20-29 (PSSGMLHLGN). Aspartate 143 contacts L-tryptophan. Residues 155–157 (GAD), isoleucine 192, and 201–205 (KMSKS) each bind ATP. The 'KMSKS' region signature appears at 201–205 (KMSKS).

The protein belongs to the class-I aminoacyl-tRNA synthetase family. As to quaternary structure, homodimer.

It is found in the cytoplasm. It catalyses the reaction tRNA(Trp) + L-tryptophan + ATP = L-tryptophyl-tRNA(Trp) + AMP + diphosphate + H(+). Its function is as follows. Catalyzes the attachment of tryptophan to tRNA(Trp). This chain is Tryptophan--tRNA ligase, found in Tropheryma whipplei (strain Twist) (Whipple's bacillus).